The primary structure comprises 89 residues: Co-chaperonin GroES (89 aa).

Belongs to the GroES chaperonin family. In terms of assembly, heptamer of 7 subunits arranged in a ring. Interacts with the chaperonin GroEL.

The protein localises to the cytoplasm. Its function is as follows. Together with the chaperonin GroEL, plays an essential role in assisting protein folding. The GroEL-GroES system forms a nano-cage that allows encapsulation of the non-native substrate proteins and provides a physical environment optimized to promote and accelerate protein folding. GroES binds to the apical surface of the GroEL ring, thereby capping the opening of the GroEL channel. The protein is Co-chaperonin GroES of Wolinella succinogenes (strain ATCC 29543 / DSM 1740 / CCUG 13145 / JCM 31913 / LMG 7466 / NCTC 11488 / FDC 602W) (Vibrio succinogenes).